The following is a 378-amino-acid chain: Chaperone protein DnaJ (378 aa).

The 65-residue stretch at 3 to 67 (DFYDTLGVNR…EKRARYDQFG (65 aa)) folds into the J domain. The segment at 132–214 (GQEREIKIPH…CGGQGVKQVR (83 aa)) adopts a CR-type zinc-finger fold. Cys-145, Cys-148, Cys-162, Cys-165, Cys-188, Cys-191, Cys-202, and Cys-205 together coordinate Zn(2+). CXXCXGXG motif repeat units follow at residues 145–152 (CDVCRGTG), 162–169 (CSTCGGAG), 188–195 (CPTCSGSG), and 202–209 (CQSCGGQG).

It belongs to the DnaJ family. Homodimer. It depends on Zn(2+) as a cofactor.

The protein resides in the cytoplasm. Its function is as follows. Participates actively in the response to hyperosmotic and heat shock by preventing the aggregation of stress-denatured proteins and by disaggregating proteins, also in an autonomous, DnaK-independent fashion. Unfolded proteins bind initially to DnaJ; upon interaction with the DnaJ-bound protein, DnaK hydrolyzes its bound ATP, resulting in the formation of a stable complex. GrpE releases ADP from DnaK; ATP binding to DnaK triggers the release of the substrate protein, thus completing the reaction cycle. Several rounds of ATP-dependent interactions between DnaJ, DnaK and GrpE are required for fully efficient folding. Also involved, together with DnaK and GrpE, in the DNA replication of plasmids through activation of initiation proteins. The sequence is that of Chaperone protein DnaJ from Prochlorococcus marinus (strain SARG / CCMP1375 / SS120).